A 660-amino-acid chain; its full sequence is Transcription activator of gluconeogenesis CHGG_09150 (660 aa).

Residues 1–12 (MSDSENEYDETD) show a composition bias toward acidic residues. The tract at residues 1-52 (MSDSENEYDETDQLVKEEDEKMSDQRLTSEGADTSAEPKKKYDPKDPLRPRR) is disordered. 2 stretches are compositionally biased toward basic and acidic residues: residues 13–24 (QLVKEEDEKMSD) and 36–49 (AEPK…DPLR). The zn(2)-C6 fungal-type DNA-binding region spans 59 to 87 (CFACQRAHLTCGDERPCQRCIKRNLMESC). 3 disordered regions span residues 98–144 (LHDA…TFFS), 170–191 (FANQ…QISG), and 319–368 (PTSI…RQSN). The segment covering 129–144 (SIQTSEASSNQGTFFS) has biased composition (polar residues). Residues 173–184 (QQSPTSPSFQTS) are compositionally biased toward low complexity. Composition is skewed to polar residues over residues 320–332 (TSIQ…TNSP) and 344–368 (TMAT…RQSN). The PAS domain maps to 455 to 526 (SLLEYEEFMH…NSKARVGLAT (72 aa)). Residues 587–613 (APDKDDGTGESSTDGQLPQKDPRNSIL) are disordered.

This sequence belongs to the ERT1/acuK family.

It is found in the nucleus. Functionally, transcription factor which regulates nonfermentable carbon utilization. Activator of gluconeogenetic genes. The chain is Transcription activator of gluconeogenesis CHGG_09150 from Chaetomium globosum (strain ATCC 6205 / CBS 148.51 / DSM 1962 / NBRC 6347 / NRRL 1970) (Soil fungus).